We begin with the raw amino-acid sequence, 121 residues long: Acid shock protein (121 aa).

The first 21 residues, 1 to 21 (MKKVLALMVAATLGLSSVAFA), serve as a signal peptide directing secretion. A propeptide spanning residues 22–63 (ADTTATATPAATSTTATVAAQTKATQHQKHKVTKKTTEQKAQ) is cleaved from the precursor. A disordered region spans residues 40-121 (AAQTKATQHQ…AKKPVAAPAA (82 aa)). Residues 74–83 (VQKAPVQKAQ) show a composition bias toward low complexity. Residues 84–93 (AAKKHVKKAS) show a composition bias toward basic residues. Residues 94 to 103 (VQKAPVQKAQ) are compositionally biased toward low complexity. Basic residues predominate over residues 104 to 113 (AAKKHHKTAK).

Belongs to the Asr family. In terms of processing, proteolytic processing gives rise to the active protein.

It localises to the periplasm. In terms of biological role, required for growth and/or survival at acidic conditions. This chain is Acid shock protein, found in Yersinia pseudotuberculosis serotype O:1b (strain IP 31758).